We begin with the raw amino-acid sequence, 137 residues long: Protein cornichon homolog 3 (137 aa).

3 helical membrane-spanning segments follow: residues isoleucine 8–leucine 28, isoleucine 54–leucine 74, and leucine 113–aspartate 133.

This sequence belongs to the cornichon family.

The protein resides in the membrane. This Arabidopsis thaliana (Mouse-ear cress) protein is Protein cornichon homolog 3.